A 75-amino-acid polypeptide reads, in one-letter code: Small ribosomal subunit protein bS18 (75 aa).

Belongs to the bacterial ribosomal protein bS18 family. In terms of assembly, part of the 30S ribosomal subunit. Forms a tight heterodimer with protein bS6.

Its function is as follows. Binds as a heterodimer with protein bS6 to the central domain of the 16S rRNA, where it helps stabilize the platform of the 30S subunit. This Wigglesworthia glossinidia brevipalpis protein is Small ribosomal subunit protein bS18.